The following is a 289-amino-acid chain: Delta-sarcoglycan (289 aa).

Over 1 to 37 (MPQEQYSHHRSTMPSSEGPHIYKVGIYGWRKRCLYFF) the chain is Cytoplasmic. A helical; Signal-anchor for type II membrane protein transmembrane segment spans residues 38–56 (VLLLMILILVNLAMTIWIL). At 57 to 289 (KVMNFTIDGM…TCQINTSVCL (233 aa)) the chain is on the extracellular side. Asn-60 and Asn-108 each carry an N-linked (GlcNAc...) asparagine glycan. 2 disulfides stabilise this stretch: Cys-263-Cys-288 and Cys-265-Cys-281. A glycan (N-linked (GlcNAc...) asparagine) is linked at Asn-284.

This sequence belongs to the sarcoglycan beta/delta/gamma/zeta family. In terms of assembly, interacts with FLNC. Cross-link to form 2 major subcomplexes: one consisting of SGCB, SGCD and SGCG and the other consisting of SGCB and SGCD. The association between SGCB and SGCG is particularly strong while SGCA is loosely associated with the other sarcoglycans. Interacts with DAG1. Disulfide bonds are present. Most strongly expressed in skeletal and heart muscle. Also detected in proliferating myoblasts.

It is found in the cell membrane. The protein localises to the sarcolemma. Its subcellular location is the cytoplasm. It localises to the cytoskeleton. Functionally, component of the sarcoglycan complex, a subcomplex of the dystrophin-glycoprotein complex which forms a link between the F-actin cytoskeleton and the extracellular matrix. The protein is Delta-sarcoglycan (Sgcd) of Mus musculus (Mouse).